The following is a 258-amino-acid chain: Tryptophan synthase alpha chain (258 aa).

Residues Glu52 and Asp63 each act as proton acceptor in the active site.

Belongs to the TrpA family. As to quaternary structure, tetramer of two alpha and two beta chains.

It carries out the reaction (1S,2R)-1-C-(indol-3-yl)glycerol 3-phosphate + L-serine = D-glyceraldehyde 3-phosphate + L-tryptophan + H2O. The protein operates within amino-acid biosynthesis; L-tryptophan biosynthesis; L-tryptophan from chorismate: step 5/5. Functionally, the alpha subunit is responsible for the aldol cleavage of indoleglycerol phosphate to indole and glyceraldehyde 3-phosphate. This chain is Tryptophan synthase alpha chain, found in Streptococcus pneumoniae (strain P1031).